The primary structure comprises 207 residues: Thiamine-phosphate synthase (207 aa).

4-amino-2-methyl-5-(diphosphooxymethyl)pyrimidine is bound by residues 36-40 and aspartate 68; that span reads QMRIK. Positions 69 and 88 each coordinate Mg(2+). A 4-amino-2-methyl-5-(diphosphooxymethyl)pyrimidine-binding site is contributed by serine 106. A 2-[(2R,5Z)-2-carboxy-4-methylthiazol-5(2H)-ylidene]ethyl phosphate-binding site is contributed by 132–134; it reads TKT. Position 135 (lysine 135) interacts with 4-amino-2-methyl-5-(diphosphooxymethyl)pyrimidine. 2-[(2R,5Z)-2-carboxy-4-methylthiazol-5(2H)-ylidene]ethyl phosphate-binding positions include glycine 162 and 182–183; that span reads IS.

Belongs to the thiamine-phosphate synthase family. It depends on Mg(2+) as a cofactor.

The catalysed reaction is 2-[(2R,5Z)-2-carboxy-4-methylthiazol-5(2H)-ylidene]ethyl phosphate + 4-amino-2-methyl-5-(diphosphooxymethyl)pyrimidine + 2 H(+) = thiamine phosphate + CO2 + diphosphate. It catalyses the reaction 2-(2-carboxy-4-methylthiazol-5-yl)ethyl phosphate + 4-amino-2-methyl-5-(diphosphooxymethyl)pyrimidine + 2 H(+) = thiamine phosphate + CO2 + diphosphate. The enzyme catalyses 4-methyl-5-(2-phosphooxyethyl)-thiazole + 4-amino-2-methyl-5-(diphosphooxymethyl)pyrimidine + H(+) = thiamine phosphate + diphosphate. Its pathway is cofactor biosynthesis; thiamine diphosphate biosynthesis; thiamine phosphate from 4-amino-2-methyl-5-diphosphomethylpyrimidine and 4-methyl-5-(2-phosphoethyl)-thiazole: step 1/1. Its function is as follows. Condenses 4-methyl-5-(beta-hydroxyethyl)thiazole monophosphate (THZ-P) and 2-methyl-4-amino-5-hydroxymethyl pyrimidine pyrophosphate (HMP-PP) to form thiamine monophosphate (TMP). This chain is Thiamine-phosphate synthase, found in Pyrococcus furiosus (strain ATCC 43587 / DSM 3638 / JCM 8422 / Vc1).